A 333-amino-acid polypeptide reads, in one-letter code: MLAYAMRRLLLLIPVLIGMTIVTFSIIHLIPGNPAQTILGEQASPQAIADLEERLGLNEPYWVQYGLYMKDLATGDLGTSLRTNKPIMEEIWPYLAATIELTIFAMIFAIIIGVNAGIVSAWKQNSWFDYLSMFIALVGVSMPIFWLALMEQWIFAQELGWLPAFGRDNPRDPIISTTGLYVFDTIISGQFDKTWESIKHLILPGIALGTIPMAIIARMTRSSMLEVLRSDYIRTVNAKGSGQGVVIYKHALKNALIPVLTVVGLQTGNLLGGAILTETIFSWPGIGRYIFEAINYRDYPVIQSGILVVATIFVLINLFVDLLYSYIDPRIKY.

Helical transmembrane passes span 10-30 (LLLI…IHLI), 99-119 (IELT…AGIV), 130-150 (YLSM…LALM), 197-217 (SIKH…AIIA), 256-276 (LIPV…GAIL), and 300-320 (PVIQ…NLFV). One can recognise an ABC transmembrane type-1 domain in the interval 95–324 (LAATIELTIF…LINLFVDLLY (230 aa)).

It belongs to the binding-protein-dependent transport system permease family. OppBC subfamily.

The protein localises to the cell membrane. Probably part of the ABC transporter Dpp involved in dipeptide transport. Responsible for the translocation of the substrate across the membrane. The polypeptide is Dipeptide transport system permease protein DppB (dppB) (Alkalihalophilus pseudofirmus (strain ATCC BAA-2126 / JCM 17055 / OF4) (Bacillus pseudofirmus)).